Reading from the N-terminus, the 105-residue chain is Zinc metalloproteinase/disintegrin (105 aa).

One can recognise a Peptidase M12B domain in the interval 1–3 (DEP). The Disintegrin domain maps to 11 to 96 (PPVCGNYFVE…AECTDRFQRN (86 aa)). Intrachain disulfides connect C25–C43, C27–C38, C37–C60, C51–C57, C56–C82, and C69–C89. Residues 75 to 77 (ECD) carry the D/ECD-tripeptide motif. The propeptide occupies 99–105 (PCQNNNG).

The protein belongs to the venom metalloproteinase (M12B) family. P-III subfamily. In terms of assembly, monomer. Zn(2+) is required as a cofactor. Expressed by the venom gland.

Its subcellular location is the secreted. Functionally, impairs hemostasis in the envenomed animal. In terms of biological role, inhibits platelet aggregation induced by ADP, thrombin, platelet-activating factor and collagen. Acts by inhibiting fibrinogen interaction with platelet receptors GPIIb/GPIIIa (ITGA2B/ITGB3). The protein is Zinc metalloproteinase/disintegrin of Gloydius brevicauda (Korean slamosa snake).